A 150-amino-acid chain; its full sequence is Cytochrome c oxidase subunit 5A, mitochondrial (150 aa).

The N-terminal 41 residues, 1-41 (MLGTALRRCAVAAASRAGSRGLLHPTPVPGPTAAIQSIRCY), are a transit peptide targeting the mitochondrion. The SIFI-degron signature appears at 2–17 (LGTALRRCAVAAASRA). Residues Lys87 and Lys113 each carry the N6-acetyllysine modification. Position 141 is a phosphothreonine (Thr141).

Belongs to the cytochrome c oxidase subunit 5A family. Component of the cytochrome c oxidase (complex IV, CIV), a multisubunit enzyme composed of 14 subunits. The complex is composed of a catalytic core of 3 subunits MT-CO1, MT-CO2 and MT-CO3, encoded in the mitochondrial DNA, and 11 supernumerary subunits COX4I, COX5A, COX5B, COX6A, COX6B, COX6C, COX7A, COX7B, COX7C, COX8 and NDUFA4, which are encoded in the nuclear genome. The complex exists as a monomer or a dimer and forms supercomplexes (SCs) in the inner mitochondrial membrane with NADH-ubiquinone oxidoreductase (complex I, CI) and ubiquinol-cytochrome c oxidoreductase (cytochrome b-c1 complex, complex III, CIII), resulting in different assemblies (supercomplex SCI(1)III(2)IV(1) and megacomplex MCI(2)III(2)IV(2)). Interacts with AFG1L. Interacts with RAB5IF. Post-translationally, in response to mitochondrial stress, the precursor protein is ubiquitinated by the SIFI complex in the cytoplasm before mitochondrial import, leading to its degradation. Within the SIFI complex, UBR4 initiates ubiquitin chain that are further elongated or branched by KCMF1.

It localises to the mitochondrion inner membrane. It functions in the pathway energy metabolism; oxidative phosphorylation. Its function is as follows. Component of the cytochrome c oxidase, the last enzyme in the mitochondrial electron transport chain which drives oxidative phosphorylation. The respiratory chain contains 3 multisubunit complexes succinate dehydrogenase (complex II, CII), ubiquinol-cytochrome c oxidoreductase (cytochrome b-c1 complex, complex III, CIII) and cytochrome c oxidase (complex IV, CIV), that cooperate to transfer electrons derived from NADH and succinate to molecular oxygen, creating an electrochemical gradient over the inner membrane that drives transmembrane transport and the ATP synthase. Cytochrome c oxidase is the component of the respiratory chain that catalyzes the reduction of oxygen to water. Electrons originating from reduced cytochrome c in the intermembrane space (IMS) are transferred via the dinuclear copper A center (CU(A)) of subunit 2 and heme A of subunit 1 to the active site in subunit 1, a binuclear center (BNC) formed by heme A3 and copper B (CU(B)). The BNC reduces molecular oxygen to 2 water molecules using 4 electrons from cytochrome c in the IMS and 4 protons from the mitochondrial matrix. The protein is Cytochrome c oxidase subunit 5A, mitochondrial (COX5A) of Otolemur crassicaudatus (Brown greater galago).